A 115-amino-acid chain; its full sequence is Guanylin (115 aa).

An N-terminal signal peptide occupies residues 1-21 (MNAFLLSALCLLGAWAALAGG). Cystine bridges form between Cys-69–Cys-82, Cys-104–Cys-112, and Cys-107–Cys-115.

This sequence belongs to the guanylin family. As to expression, highly expressed in ileum and colon. Found in plasma.

Its subcellular location is the secreted. Functionally, endogenous activator of intestinal guanylate cyclase. It stimulates this enzyme through the same receptor binding region as the heat-stable enterotoxins. The sequence is that of Guanylin (GUCA2A) from Homo sapiens (Human).